The chain runs to 311 residues: MSKILVFGHQNPDTDAIASSYAFDYLSQKAFGLDTEVVALGTPNEETAFALDYFGVEAPRVVESAKAQGSEQVILTDHNEFQQSIADIREVEVYGVVDHHRVANFETANPLYMRVEPVGSASSIVYRMFKENGIEVPKAIAGMLLSGLISDTLLLKSPTTHVSDHLVAEELAELAEVNLEDYGMALLKAGTNLASKSEVELIGIDAKTFELNGNAVRVAQVNTVDIAEVLERQEAIEAAIKDAMAAEGYSDFVLMITDIVNSNSEILAIGANMDKVEAAFNFTLDNNHAFLAGAVSRKKQVVPQLTESFGA.

Residues His-9, Asp-13, Asp-15, Asp-77, His-99, and Asp-151 each coordinate Mn(2+).

It belongs to the PPase class C family. Mn(2+) is required as a cofactor.

Its subcellular location is the cytoplasm. It carries out the reaction diphosphate + H2O = 2 phosphate + H(+). This chain is Probable manganese-dependent inorganic pyrophosphatase, found in Streptococcus pyogenes serotype M1.